The chain runs to 100 residues: UPF0213 protein YhbQ (100 aa).

A GIY-YIG domain is found at 2-77 (TPWFLYLIRT…KQLTKRQKER (76 aa)).

Belongs to the UPF0213 family.

The polypeptide is UPF0213 protein YhbQ (Escherichia coli O157:H7).